The following is a 555-amino-acid chain: Formate--tetrahydrofolate ligase (555 aa).

Thr65 to Thr72 is an ATP binding site.

Belongs to the formate--tetrahydrofolate ligase family.

The enzyme catalyses (6S)-5,6,7,8-tetrahydrofolate + formate + ATP = (6R)-10-formyltetrahydrofolate + ADP + phosphate. It functions in the pathway one-carbon metabolism; tetrahydrofolate interconversion. This is Formate--tetrahydrofolate ligase from Paracoccus denitrificans (strain Pd 1222).